We begin with the raw amino-acid sequence, 189 residues long: Thermostable direct hemolysin 2 (189 aa).

The signal sequence occupies residues 1–24 (MKYRYFAKKSFLFISMLAAFKTFA). Cys-175 and Cys-185 form a disulfide bridge.

It belongs to the TDH hemolysin family. In terms of assembly, homodimer.

Bacterial hemolysins are exotoxins that attack blood cell membranes and cause cell rupture by mechanisms not clearly defined. This Vibrio parahaemolyticus serotype O3:K6 (strain RIMD 2210633) protein is Thermostable direct hemolysin 2 (tdh2).